The sequence spans 269 residues: SF-assemblin (269 aa).

Positions 1-23 (MSISPGRSFSPMRASGLTGITSA) are disordered. A nonhelical region region spans residues 1–24 (MSISPGRSFSPMRASGLTGITSAG). The interval 25-269 (PTAKLEHVSE…LQEGLKLVST (245 aa)) is rod. Residues 98-144 (AERSAAQHVDMQNSLKQAVDSLSNRLQDLHSLVREEREQRRNDIEHL) are a coiled coil.

It belongs to the SF-assemblin family.

Its subcellular location is the cytoplasm. The protein localises to the cytoskeleton. In terms of biological role, major component of the striated microtubule-associated fibers (SMAFs; system-I-fibers). In Chlamydomonas moewusii (Chlamydomonas eugametos), this protein is SF-assemblin.